Reading from the N-terminus, the 323-residue chain is Prostaglandin F synthase 1 (323 aa).

NADP(+) is bound by residues 20 to 24 and D50; that span reads GFGTY. Y55 functions as the Proton donor in the catalytic mechanism. H117 lines the substrate pocket. Residues 166–167, Q190, 216–221, and 270–280 contribute to the NADP(+) site; these read SN, YAALGA, and KSFNKKRIKEN.

Belongs to the aldo/keto reductase family. Monomer. In terms of processing, the N-terminus is blocked.

The protein resides in the cytoplasm. The enzyme catalyses prostaglandin F2alpha + NADP(+) = prostaglandin D2 + NADPH + H(+). Its pathway is lipid metabolism; prostaglandin biosynthesis. In terms of biological role, catalyzes the reduction of PGD(2) and PGH(2) to PGF(2 alpha) and a stereoisomer, respectively. It has a broad substrate specificity and also reduces other carbonyl compounds. This chain is Prostaglandin F synthase 1, found in Bos taurus (Bovine).